We begin with the raw amino-acid sequence, 41 residues long: Large ribosomal subunit protein bL36 (41 aa).

The protein belongs to the bacterial ribosomal protein bL36 family.

The chain is Large ribosomal subunit protein bL36 from Rhodopseudomonas palustris (strain BisB18).